Here is a 346-residue protein sequence, read N- to C-terminus: Putative alpha/beta hydrolase R526 (346 aa).

This sequence belongs to the AB hydrolase 3 family.

It localises to the virion. The polypeptide is Putative alpha/beta hydrolase R526 (Acanthamoeba polyphaga mimivirus (APMV)).